Reading from the N-terminus, the 462-residue chain is Fumarate hydratase class II (462 aa).

Substrate-binding positions include 97–99 (SGT), 127–130 (HPND), 137–139 (SSN), and Thr-185. The active-site Proton donor/acceptor is His-186. The active site involves Ser-316. Substrate is bound by residues Ser-317 and 322-324 (KVN).

It belongs to the class-II fumarase/aspartase family. Fumarase subfamily. As to quaternary structure, homotetramer.

Its subcellular location is the cytoplasm. The enzyme catalyses (S)-malate = fumarate + H2O. Its pathway is carbohydrate metabolism; tricarboxylic acid cycle; (S)-malate from fumarate: step 1/1. Involved in the TCA cycle. Catalyzes the stereospecific interconversion of fumarate to L-malate. The sequence is that of Fumarate hydratase class II from Halalkalibacterium halodurans (strain ATCC BAA-125 / DSM 18197 / FERM 7344 / JCM 9153 / C-125) (Bacillus halodurans).